Reading from the N-terminus, the 384-residue chain is Ceramide synthase 6 (384 aa).

Residues M1–Q34 are Lumenal-facing. N-linked (GlcNAc...) asparagine glycosylation is present at N18. The helical transmembrane segment at A35 to F55 threads the bilayer. Residues A66–S127 are homeobox-like. In terms of domain architecture, TLC spans T130 to S331. 4 helical membrane passes run L174–V194, F205–N225, L263–V283, and V303–V323. At K324–D384 the chain is on the cytoplasmic side. A disordered region spans residues V335–D384. Positions S361–G373 are enriched in low complexity.

Post-translationally, N-glycosylated. Glycosylation on Asn-18 is not necessary for function. Acetylated. Deacetylation by SIRT3 increases enzyme activity and promotes mitochondrial ceramide accumulation. In terms of processing, phosphorylated at the C-terminus by CK2. Broadly expressed, with highest levels in kidney and brain (at protein level).

Its subcellular location is the endoplasmic reticulum membrane. It catalyses the reaction a sphingoid base + hexadecanoyl-CoA = an N-hexadecanoyl-sphingoid base + CoA + H(+). The enzyme catalyses sphinganine + hexadecanoyl-CoA = N-hexadecanoylsphinganine + CoA + H(+). It carries out the reaction hexadecasphinganine + hexadecanoyl-CoA = N-hexadecanoylhexadecasphinganine + CoA + H(+). The catalysed reaction is sphing-4-enine + hexadecanoyl-CoA = N-hexadecanoylsphing-4-enine + CoA + H(+). It catalyses the reaction sphinganine + tetradecanoyl-CoA = N-(tetradecanoyl)-sphinganine + CoA + H(+). The enzyme catalyses sphinganine + octadecanoyl-CoA = N-(octadecanoyl)-sphinganine + CoA + H(+). It functions in the pathway lipid metabolism; sphingolipid metabolism. Ceramide synthase that catalyzes the transfer of the acyl chain from acyl-CoA to a sphingoid base, with high selectivity toward palmitoyl-CoA (hexadecanoyl-CoA; C16:0-CoA). Can use other acyl donors, but with less efficiency. N-acylates sphinganine and sphingosine bases to form dihydroceramides and ceramides in de novo synthesis and salvage pathways, respectively. Ceramides generated by CERS6 play a role in inflammatory response. Acts as a regulator of metabolism and hepatic lipid accumulation. Under high fat diet, palmitoyl- (C16:0-) ceramides generated by CERS6 specifically bind the mitochondrial fission factor MFF, thereby promoting mitochondrial fragmentation and contributing to the development of obesity. This Mus musculus (Mouse) protein is Ceramide synthase 6.